Here is a 276-residue protein sequence, read N- to C-terminus: 5'-nucleotidase SurE (276 aa).

A divalent metal cation contacts are provided by aspartate 14, aspartate 15, serine 46, and asparagine 104.

It belongs to the SurE nucleotidase family. A divalent metal cation is required as a cofactor.

Its subcellular location is the cytoplasm. It catalyses the reaction a ribonucleoside 5'-phosphate + H2O = a ribonucleoside + phosphate. Its function is as follows. Nucleotidase that shows phosphatase activity on nucleoside 5'-monophosphates. This chain is 5'-nucleotidase SurE, found in Crocosphaera subtropica (strain ATCC 51142 / BH68) (Cyanothece sp. (strain ATCC 51142)).